The chain runs to 281 residues: uncharacterized protein (281 aa).

A coiled-coil region spans residues 242 to 281 (IDKQSRKKNIIREINDIKSKINDLSNYMDNLISELDDLFD).

This is an uncharacterized protein from Acanthamoeba polyphaga (Amoeba).